Consider the following 222-residue polypeptide: MTRDLTPVEARIVGVLVEKQSTVPDTYPLSLNSLVAGCNQKTTRDPVMTLTDAQVLLAIDELKSLHLVLEGSGSRVVRYEHNLGRVLGVPGAAVALLATLMLRGPQTAAELRAHSERLHRFADVSSVEGFLDELAEKSPPRVLKLPRAPGAREARWVHLLCGEVDVAALSVGGAASQMAGGAADDELALLRAEHKQVLAEVALLRSQVQRLADELGVNLDPA.

This sequence belongs to the UPF0502 family.

The chain is UPF0502 protein Lcho_2066 from Leptothrix cholodnii (strain ATCC 51168 / LMG 8142 / SP-6) (Leptothrix discophora (strain SP-6)).